The following is a 531-amino-acid chain: GTPase Obg (531 aa).

The Obg domain occupies 2–159; sequence ASFVDRVIVH…QEVELELKSI (158 aa). The OBG-type G domain maps to 160 to 341; the sequence is ADIALVGFPS…LSFAMAALVS (182 aa). GTP is bound by residues 166–173, 191–195, 212–215, 293–296, and 322–324; these read GFPSAGKS, FTTLV, DVPG, NKVD, and STA. Mg(2+) is bound by residues Ser-173 and Thr-193. The disordered stretch occupies residues 346–365; that stretch reads QEEQREQQRQTVPVLQPEPV. An OCT domain is found at 368-453; sequence RRGRDRREFV…ENGVVFDWEP (86 aa). Residues 459–531 are disordered; the sequence is AELLGGPRGS…TSETKETNEK (73 aa). Basic and acidic residues-rich tracts occupy residues 468–507 and 514–531; these read SDLR…ERRA and VDAR…TNEK.

The protein belongs to the TRAFAC class OBG-HflX-like GTPase superfamily. OBG GTPase family. Monomer. Requires Mg(2+) as cofactor.

It is found in the cytoplasm. An essential GTPase which binds GTP, GDP and possibly (p)ppGpp with moderate affinity, with high nucleotide exchange rates and a fairly low GTP hydrolysis rate. Plays a role in control of the cell cycle, stress response, ribosome biogenesis and in those bacteria that undergo differentiation, in morphogenesis control. The protein is GTPase Obg of Kocuria rhizophila (strain ATCC 9341 / DSM 348 / NBRC 103217 / DC2201).